The sequence spans 255 residues: tRNA (guanine-N(1)-)-methyltransferase (255 aa).

Residues G113 and 133–138 (IGDYVL) each bind S-adenosyl-L-methionine.

Belongs to the RNA methyltransferase TrmD family. As to quaternary structure, homodimer.

The protein resides in the cytoplasm. It catalyses the reaction guanosine(37) in tRNA + S-adenosyl-L-methionine = N(1)-methylguanosine(37) in tRNA + S-adenosyl-L-homocysteine + H(+). Functionally, specifically methylates guanosine-37 in various tRNAs. The polypeptide is tRNA (guanine-N(1)-)-methyltransferase (Klebsiella pneumoniae subsp. pneumoniae (strain ATCC 700721 / MGH 78578)).